Consider the following 553-residue polypeptide: Protein PNS1 (553 aa).

The tract at residues 1–53 is disordered; sequence MFGEGNKPTEPVPAYDAGQDPFQGPNASKNQYQGSAADYNGAPPPPASQPGNQ. The Cytoplasmic portion of the chain corresponds to 1–94; sequence MFGEGNKPTE…EDSKPKWNDW (94 aa). Over residues 25–34 the composition is skewed to polar residues; sequence PNASKNQYQG. A helical membrane pass occupies residues 95–115; that stretch reads PFTIFFAGCVIAFIVVAAITL. At 116–142 the chain is on the extracellular side; the sequence is RAWSQNSSSQGSGVYDGANTGTLTTNS. The N-linked (GlcNAc...) asparagine glycan is linked to Asn121. The chain crosses the membrane as a helical span at residues 143–163; it reads AIMLAISCIIAFVFSIIGIVL. The Cytoplasmic portion of the chain corresponds to 164-169; the sequence is ARMFPK. A helical membrane pass occupies residues 170–190; it reads FFIIAGILFNIIAGLATAIMY. The Extracellular segment spans residues 191 to 192; it reads LS. Residues 193–213 traverse the membrane as a helical segment; sequence LKYYSAGIVFLVFTAICALFY. The Cytoplasmic segment spans residues 214–241; the sequence is WRMRHRIPFTVAVLKTVMDVMKSYPQTW. Residues 242 to 262 traverse the membrane as a helical segment; sequence FVTLIGSIIATAFSILFSAVI. Residues 263–287 lie on the Extracellular side of the membrane; the sequence is VATYMKYDDKANNPGCSTNGGSCSN. Residues 288–308 form a helical membrane-spanning segment; the sequence is AKLIGLLVLVFFCGYYIAEVI. Residues 309–349 are Cytoplasmic-facing; that stretch reads RNVIHCTVSGIFGAWYYFSKSDQGMPKWPGFGALKRSLTYS. The helical transmembrane segment at 350–370 threads the bilayer; it reads FGSICFGSLIVTIIETLKAVL. Topologically, residues 371–385 are extracellular; sequence RLAVDGVMGGGGADN. A helical transmembrane segment spans residues 386–406; sequence GWMQCLALIANWIFSFLEWLA. Over 407-450 the chain is Cytoplasmic; sequence RYFNHYAYVFIALYGKPYLRAAKETWYMLREKGIDALINDNLVN. The chain crosses the membrane as a helical span at residues 451-471; the sequence is VALSFFTLFTCYITTLFAYLY. At 472-484 the chain is on the extracellular side; that stretch reads LRYTDPNYNDNNN. Residues 485–505 form a helical membrane-spanning segment; sequence FTPALMAFAFVIAMEICNVIT. The Cytoplasmic segment spans residues 506–553; it reads ETIRSGTATFFVALGNDPEVFHLSYPERFDEIFRAYPEVLKKLSHQNV.

This sequence belongs to the CTL (choline transporter-like) family.

It localises to the cell membrane. Its function is as follows. Probably involved in transport through the plasma membrane. This Kluyveromyces lactis (strain ATCC 8585 / CBS 2359 / DSM 70799 / NBRC 1267 / NRRL Y-1140 / WM37) (Yeast) protein is Protein PNS1 (PNS1).